A 67-amino-acid polypeptide reads, in one-letter code: Large ribosomal subunit protein bL31 (67 aa).

Positions 16, 18, 36, and 39 each coordinate Zn(2+).

Belongs to the bacterial ribosomal protein bL31 family. Type A subfamily. In terms of assembly, part of the 50S ribosomal subunit. Zn(2+) is required as a cofactor.

Functionally, binds the 23S rRNA. In Treponema denticola (strain ATCC 35405 / DSM 14222 / CIP 103919 / JCM 8153 / KCTC 15104), this protein is Large ribosomal subunit protein bL31.